The sequence spans 96 residues: Carboxysome shell protein CsoS1A (96 aa).

The region spanning 7-92 (ALGMIETRGL…PHKEVEPVLT (86 aa)) is the BMC domain.

This sequence belongs to the bacterial microcompartments protein family. CsoS1 subfamily. As to quaternary structure, homohexamer with a small central pore. Forms a CsoS2-CsoS1-RuBisCO complex.

It localises to the carboxysome. Its function is as follows. One of shell proteins of the carboxysome, a polyhedral inclusion where RuBisCO (ribulose bisphosphate carboxylase, ccbL-ccbS) is sequestered. Assembles into hexamers which make sheets that form the facets of the polyhedral carboxysome. The shell probably limits the diffusion of CO(2) into and out of the carboxysome. This Hydrogenovibrio crunogenus (strain DSM 25203 / XCL-2) (Thiomicrospira crunogena) protein is Carboxysome shell protein CsoS1A.